The primary structure comprises 362 residues: Serpentine receptor class epsilon-37 (362 aa).

The next 7 membrane-spanning stretches (helical) occupy residues Ile29–Val49, Ile67–Ile87, Ile127–Ala147, Ile170–Thr190, Ile204–Trp224, Leu260–Phe280, and Phe288–Leu308.

This sequence belongs to the nematode receptor-like protein sre family.

The protein localises to the membrane. The protein is Serpentine receptor class epsilon-37 (sre-37) of Caenorhabditis elegans.